Consider the following 1050-residue polypeptide: Mitotic checkpoint serine/threonine-protein kinase BUB1 beta (1050 aa).

The BUB1 N-terminal domain maps to 62–226 (FEYEIRFYTG…FESSVPQRST (165 aa)). The Nuclear localization signal signature appears at 111–118 (GEKRYYSD). The tract at residues 152 to 185 (AQFYISWAEEYEARENFRKADAIFQEGIQQKAEP) is necessary for interaction with KNL1. The short motif at 224-232 (RSTLAELKS) is the D-box element. Lysine 250 carries the post-translational modification N6-acetyllysine; by PCAF. At serine 367 the chain carries Phosphoserine. The interval 368 to 393 (TRKPGKEEGDPLQRVQSHQQASEEKK) is disordered. Serine 435 bears the Phosphoserine mark. The segment at 456-480 (IQTTQQERTGDQQEETMPTKETTKL) is disordered. 3 positions are modified to phosphoserine: serine 543, serine 665, and serine 670. The residue at position 676 (serine 676) is a Phosphoserine; by PLK1. At serine 697 the chain carries Phosphoserine. Residues 766 to 1050 (YCIKREYLIC…LTSPGALLFQ (285 aa)) form the Protein kinase domain. Position 772-780 (772-780 (YLICEDYKL)) interacts with ATP. The residue at position 792 (threonine 792) is a Phosphothreonine; by PLK1. Lysine 795 is an ATP binding site. The Proton acceptor role is filled by aspartate 882. Threonine 1008 is modified (phosphothreonine; by PLK1). Threonine 1042 bears the Phosphothreonine mark. Serine 1043 bears the Phosphoserine mark.

The protein belongs to the protein kinase superfamily. Ser/Thr protein kinase family. BUB1 subfamily. Interacts with CENPE. Interacts with PLK1. Part of a complex containing BUB3, CDC20 and BUB1B. Interacts with anaphase-promoting complex/cyclosome (APC/C). Interacts with KNL1. Interacts with KAT2B. Interacts with RIPK3. Interacts with the closed conformation form of MAD2L1. In terms of processing, proteolytically cleaved by caspase-3 in a cell cycle specific manner. The cleavage might be involved in the durability of the cell cycle delay. Caspase-3 cleavage is associated with abrogation of the mitotic checkpoint. The major site of cleavage is at Asp-610. Acetylation at Lys-250 regulates its degradation and timing in anaphase entry. Post-translationally, ubiquitinated. Degraded by the proteasome. Ubiquitinated by UBR5, promoting disassembly of the mitotic checkpoint complex from the APC/C complex. In terms of processing, sumoylated with SUMO2 and SUMO3. The sumoylation mediates the association with CENPE at the kinetochore. Autophosphorylated in vitro. Intramolecular autophosphorylation is stimulated by CENPE. Phosphorylated during mitosis and hyperphosphorylated in mitotically arrested cells. Phosphorylation at Ser-670 and Ser-1043 occurs at kinetochores upon mitotic entry with dephosphorylation at the onset of anaphase. As to expression, highly expressed in thymus followed by spleen. Preferentially expressed in tissues with a high mitotic index.

The protein resides in the cytoplasm. It is found in the nucleus. It localises to the chromosome. The protein localises to the centromere. Its subcellular location is the kinetochore. The protein resides in the cytoskeleton. It is found in the microtubule organizing center. It localises to the centrosome. The enzyme catalyses L-seryl-[protein] + ATP = O-phospho-L-seryl-[protein] + ADP + H(+). It carries out the reaction L-threonyl-[protein] + ATP = O-phospho-L-threonyl-[protein] + ADP + H(+). Its activity is regulated as follows. Kinase activity stimulated by CENPE. Essential component of the mitotic checkpoint. Required for normal mitosis progression. The mitotic checkpoint delays anaphase until all chromosomes are properly attached to the mitotic spindle. One of its checkpoint functions is to inhibit the activity of the anaphase-promoting complex/cyclosome (APC/C) by blocking the binding of CDC20 to APC/C, independently of its kinase activity. The other is to monitor kinetochore activities that depend on the kinetochore motor CENPE. Required for kinetochore localization of CENPE. Negatively regulates PLK1 activity in interphase cells and suppresses centrosome amplification. Also implicated in triggering apoptosis in polyploid cells that exit aberrantly from mitotic arrest. May play a role for tumor suppression. The sequence is that of Mitotic checkpoint serine/threonine-protein kinase BUB1 beta (BUB1B) from Homo sapiens (Human).